The sequence spans 545 residues: Membrane protein insertase YidC (545 aa).

A helical membrane pass occupies residues 6–26; that stretch reads LILFSALVLVLFLMWDAWQTD. Residues 34–59 form a disordered region; sequence PPPPQPTASSGESSPVLPEAVPDAPP. 3 consecutive transmembrane segments (helical) span residues 357 to 377, 428 to 448, and 505 to 525; these read LVGNWGWAIVLLTFVVKLVFF, GGCLPIVVQIPVFIALYWMLL, and PVMFTVFFVMFPAGLVLYWVV.

Belongs to the OXA1/ALB3/YidC family. Type 1 subfamily. In terms of assembly, interacts with the Sec translocase complex via SecD. Specifically interacts with transmembrane segments of nascent integral membrane proteins during membrane integration.

Its subcellular location is the cell inner membrane. In terms of biological role, required for the insertion and/or proper folding and/or complex formation of integral membrane proteins into the membrane. Involved in integration of membrane proteins that insert both dependently and independently of the Sec translocase complex, as well as at least some lipoproteins. Aids folding of multispanning membrane proteins. This Nitrosococcus oceani (strain ATCC 19707 / BCRC 17464 / JCM 30415 / NCIMB 11848 / C-107) protein is Membrane protein insertase YidC.